We begin with the raw amino-acid sequence, 436 residues long: Hydroxycinnamoyltransferase (436 aa).

Active-site proton acceptor residues include histidine 154 and aspartate 383.

This sequence belongs to the plant acyltransferase family. As to expression, mostly expressed in stems, and, to a lower extent, in bulbs.

It participates in phenylpropanoid metabolism. In terms of biological role, hydroxycinnamoyl transferase that catalyzes the transfer of an acyl from p-coumaryol-CoA to various acyl acceptors. Can use feruloyl-CoA and caffeoyl-CoA as acyl donors. The chain is Hydroxycinnamoyltransferase from Narcissus pseudonarcissus (Daffodil).